A 196-amino-acid polypeptide reads, in one-letter code: Holliday junction branch migration complex subunit RuvA (196 aa).

The segment at 1–63 (MIEYIKGEIV…EDAHLLFGFA (63 aa)) is domain I. Residues 64 to 142 (EKIERELFLL…PMESMAGNLP (79 aa)) are domain II. The tract at residues 142 to 146 (PEASV) is flexible linker. The segment at 147 to 196 (SNGAVTEEAVAALVMLGFQKAASQKAVSAILKGSPTLAVEQVIKTALRML) is domain III.

This sequence belongs to the RuvA family. Homotetramer. Forms an RuvA(8)-RuvB(12)-Holliday junction (HJ) complex. HJ DNA is sandwiched between 2 RuvA tetramers; dsDNA enters through RuvA and exits via RuvB. An RuvB hexamer assembles on each DNA strand where it exits the tetramer. Each RuvB hexamer is contacted by two RuvA subunits (via domain III) on 2 adjacent RuvB subunits; this complex drives branch migration. In the full resolvosome a probable DNA-RuvA(4)-RuvB(12)-RuvC(2) complex forms which resolves the HJ.

The protein localises to the cytoplasm. Functionally, the RuvA-RuvB-RuvC complex processes Holliday junction (HJ) DNA during genetic recombination and DNA repair, while the RuvA-RuvB complex plays an important role in the rescue of blocked DNA replication forks via replication fork reversal (RFR). RuvA specifically binds to HJ cruciform DNA, conferring on it an open structure. The RuvB hexamer acts as an ATP-dependent pump, pulling dsDNA into and through the RuvAB complex. HJ branch migration allows RuvC to scan DNA until it finds its consensus sequence, where it cleaves and resolves the cruciform DNA. This is Holliday junction branch migration complex subunit RuvA from Parabacteroides distasonis (strain ATCC 8503 / DSM 20701 / CIP 104284 / JCM 5825 / NCTC 11152).